Here is a 622-residue protein sequence, read N- to C-terminus: UvrABC system protein C (622 aa).

The GIY-YIG domain maps to 13–92; that stretch reads DKPGVYLMKN…IKENRPKYNV (80 aa). The UVR domain occupies 205–240; sequence DELIKKIEEKMKRAAEKMDFEGAAHYRDQRQALLDI.

Belongs to the UvrC family. As to quaternary structure, interacts with UvrB in an incision complex.

The protein resides in the cytoplasm. In terms of biological role, the UvrABC repair system catalyzes the recognition and processing of DNA lesions. UvrC both incises the 5' and 3' sides of the lesion. The N-terminal half is responsible for the 3' incision and the C-terminal half is responsible for the 5' incision. This chain is UvrABC system protein C, found in Alkaliphilus metalliredigens (strain QYMF).